A 765-amino-acid chain; its full sequence is Beta-glucosidase cel3A (765 aa).

The signal sequence occupies residues 1–24 (MRWSSPTSSSLSLVALLLVAHVDA). 10 N-linked (GlcNAc...) asparagine glycosylation sites follow: Asn-66, Asn-124, Asn-250, Asn-304, Asn-311, Asn-349, Asn-549, Asn-588, Asn-657, and Asn-681.

It belongs to the glycosyl hydrolase 3 family.

It localises to the secreted. It carries out the reaction Hydrolysis of terminal, non-reducing beta-D-glucosyl residues with release of beta-D-glucose.. It functions in the pathway glycan metabolism; cellulose degradation. Functionally, beta-glucosidases are one of a number of cellulolytic enzymes involved in the degradation of cellulosic biomass. Catalyzes the last step releasing glucose from the inhibitory cellobiose. Shows higher activities on cellobiose and cellotriose but lower activities on laminarioligosaccharides and polymers. The protein is Beta-glucosidase cel3A of Pyricularia oryzae (strain 70-15 / ATCC MYA-4617 / FGSC 8958) (Rice blast fungus).